The primary structure comprises 763 residues: Endothelin-converting enzyme 2 (763 aa).

Residues 1 to 60 (MNVALHELGGGGSMVEYKRAKLRDEESPEITVEGRATRDSLEVGFQKRTRQLFGSHTQLE) are Cytoplasmic-facing. Serine 27 is modified (phosphoserine). Residues 61–81 (LVLAGLILVLAALLLGCLVAL) traverse the membrane as a helical; Signal-anchor for type II membrane protein segment. Residues 82–763 (WVHRDPAHST…MNPGQLCEVW (682 aa)) are Lumenal-facing. In terms of domain architecture, Peptidase M13 spans 91–763 (TCVTEACIRV…MNPGQLCEVW (673 aa)). 5 cysteine pairs are disulfide-bonded: cysteine 92/cysteine 97, cysteine 115/cysteine 748, cysteine 123/cysteine 708, cysteine 179/cysteine 428, and cysteine 637/cysteine 760. 7 N-linked (GlcNAc...) asparagine glycosylation sites follow: asparagine 159, asparagine 163, asparagine 204, asparagine 264, asparagine 309, asparagine 376, and asparagine 532. Histidine 600 contributes to the Zn(2+) binding site. The active site involves glutamate 601. Histidine 604 is a binding site for Zn(2+). 2 N-linked (GlcNAc...) asparagine glycosylation sites follow: asparagine 625 and asparagine 633. Glutamate 660 is a binding site for Zn(2+). Aspartate 664 serves as the catalytic Proton donor.

This sequence belongs to the peptidase M13 family. The cofactor is Zn(2+).

It is found in the golgi apparatus membrane. It localises to the cytoplasmic vesicle. The protein localises to the secretory vesicle membrane. It carries out the reaction Hydrolysis of the 21-Trp-|-Val-22 bond in big endothelin to form endothelin 1.. Functionally, converts big endothelin-1 to endothelin-1. Also involved in the processing of various neuroendocrine peptides, including neurotensin, angiotensin I, substance P, proenkephalin-derived peptides, and prodynorphin-derived peptides. May play a role in amyloid-beta processing. This chain is Endothelin-converting enzyme 2, found in Mus musculus (Mouse).